We begin with the raw amino-acid sequence, 853 residues long: Putative dipeptidyl aminopeptidase C14C4.15c (853 aa).

The tract at residues 1 to 26 (MNAYEGDTLNNHGKSSTRQHWRKRSA) is disordered. The Cytoplasmic segment spans residues 1–65 (MNAYEGDTLN…AKKRRRKKHR (65 aa)). Residues 15 to 25 (SSTRQHWRKRS) show a composition bias toward basic residues. The helical; Signal-anchor for type II membrane protein transmembrane segment at 66–86 (YIYLAVCLFFLASVLSCAIIF) threads the bilayer. Residues 87-853 (RFYLHTNREN…SGHFHHALYC (767 aa)) lie on the Lumenal side of the membrane. Residues Asn-96, Asn-102, Asn-472, Asn-483, and Asn-613 are each glycosylated (N-linked (GlcNAc...) asparagine). Active-site charge relay system residues include Ser-719, Asp-795, and His-828.

This sequence belongs to the peptidase S9B family.

It is found in the vacuole membrane. The protein is Putative dipeptidyl aminopeptidase C14C4.15c of Schizosaccharomyces pombe (strain 972 / ATCC 24843) (Fission yeast).